Reading from the N-terminus, the 674-residue chain is tRNA 5-methylaminomethyl-2-thiouridine biosynthesis bifunctional protein MnmC (674 aa).

Positions 1–237 (MLTSYQLESP…KREMTVGELN (237 aa)) are tRNA (mnm(5)s(2)U34)-methyltransferase. Residues 270-674 (VGAGLAGANT…IRDLKRSQIL (405 aa)) are FAD-dependent cmnm(5)s(2)U34 oxidoreductase.

In the N-terminal section; belongs to the methyltransferase superfamily. tRNA (mnm(5)s(2)U34)-methyltransferase family. The protein in the C-terminal section; belongs to the DAO family. FAD is required as a cofactor.

The protein resides in the cytoplasm. It catalyses the reaction 5-aminomethyl-2-thiouridine(34) in tRNA + S-adenosyl-L-methionine = 5-methylaminomethyl-2-thiouridine(34) in tRNA + S-adenosyl-L-homocysteine + H(+). Its function is as follows. Catalyzes the last two steps in the biosynthesis of 5-methylaminomethyl-2-thiouridine (mnm(5)s(2)U) at the wobble position (U34) in tRNA. Catalyzes the FAD-dependent demodification of cmnm(5)s(2)U34 to nm(5)s(2)U34, followed by the transfer of a methyl group from S-adenosyl-L-methionine to nm(5)s(2)U34, to form mnm(5)s(2)U34. This chain is tRNA 5-methylaminomethyl-2-thiouridine biosynthesis bifunctional protein MnmC, found in Marinomonas sp. (strain MWYL1).